The sequence spans 495 residues: Syntaphilin (495 aa).

Residues 1 to 74 (MAMSLQGSRR…HGIKPPTPEQ (74 aa)) are disordered. Positions 7 to 49 (GSRRASAGSRRRTSPPVSVRDAYGTSSLSSSSNSGSCKGSDSS) are enriched in low complexity. Residues 79-161 (LQQKEVCIRH…VKNNLIDKDK (83 aa)) are a coiled coil. Residues 191–244 (VAKEEGTGESAGGSPARSLTRSSTYTKLSDPAVCGDRQPGDPSNTSAEDGADSG) form a disordered region. Ser-200 and Ser-204 each carry phosphoserine. Positions 207–217 (RSLTRSSTYTK) are enriched in polar residues. Thr-214 carries the post-translational modification Phosphothreonine. Ser-219 is subject to Phosphoserine. Position 235 is a phosphothreonine (Thr-235). Residues 427-446 (YIVDLLAVVVPAVPTVAWLC) form a helical membrane-spanning segment.

As to quaternary structure, binds to STX1A. Interacts with DNM1; this interaction inhibits the binding of DNM1 to AMPH and DNM1-receptor-mediated endocytosis.

The protein localises to the membrane. It localises to the synapse. The protein resides in the synaptosome. Its function is as follows. Inhibits SNARE complex formation by absorbing free STX1A. The sequence is that of Syntaphilin from Mus musculus (Mouse).